The following is a 417-amino-acid chain: Bifunctional thiamine biosynthesis protein ThiDN (417 aa).

The tract at residues Met1–Pro235 is hydroxymethylpyrimidine/phosphomethylpyrimidine kinase. Residue Gln41 participates in 4-amino-5-hydroxymethyl-2-methylpyrimidine binding. The tract at residues Thr236 to Met417 is thiamine-phosphate synthase.

The protein in the N-terminal section; belongs to the ThiD family. In the C-terminal section; belongs to the ThiN family.

The enzyme catalyses 4-amino-5-hydroxymethyl-2-methylpyrimidine + ATP = 4-amino-2-methyl-5-(phosphooxymethyl)pyrimidine + ADP + H(+). It carries out the reaction 4-amino-2-methyl-5-(phosphooxymethyl)pyrimidine + ATP = 4-amino-2-methyl-5-(diphosphooxymethyl)pyrimidine + ADP. It catalyses the reaction 2-[(2R,5Z)-2-carboxy-4-methylthiazol-5(2H)-ylidene]ethyl phosphate + 4-amino-2-methyl-5-(diphosphooxymethyl)pyrimidine + 2 H(+) = thiamine phosphate + CO2 + diphosphate. The catalysed reaction is 2-(2-carboxy-4-methylthiazol-5-yl)ethyl phosphate + 4-amino-2-methyl-5-(diphosphooxymethyl)pyrimidine + 2 H(+) = thiamine phosphate + CO2 + diphosphate. The enzyme catalyses 4-methyl-5-(2-phosphooxyethyl)-thiazole + 4-amino-2-methyl-5-(diphosphooxymethyl)pyrimidine + H(+) = thiamine phosphate + diphosphate. It participates in cofactor biosynthesis; thiamine diphosphate biosynthesis; 4-amino-2-methyl-5-diphosphomethylpyrimidine from 5-amino-1-(5-phospho-D-ribosyl)imidazole. Its pathway is cofactor biosynthesis; thiamine diphosphate biosynthesis; thiamine phosphate from 4-amino-2-methyl-5-diphosphomethylpyrimidine and 4-methyl-5-(2-phosphoethyl)-thiazole: step 1/1. Functionally, catalyzes the phosphorylation of hydroxymethylpyrimidine phosphate (HMP-P) to HMP-PP, and of HMP to HMP-P. Its function is as follows. Condenses 4-methyl-5-(beta-hydroxyethyl)thiazole monophosphate (THZ-P) and 4-amino-5-hydroxymethyl pyrimidine pyrophosphate (HMP-PP) to form thiamine monophosphate (TMP). The chain is Bifunctional thiamine biosynthesis protein ThiDN (thiDN) from Methanocaldococcus jannaschii (strain ATCC 43067 / DSM 2661 / JAL-1 / JCM 10045 / NBRC 100440) (Methanococcus jannaschii).